A 104-amino-acid chain; its full sequence is NADH-quinone oxidoreductase subunit K (104 aa).

A run of 3 helical transmembrane segments spans residues 4–24 (VPAS…LFGA), 31–51 (VIVL…LVAF), and 67–87 (LFTM…LIAL).

This sequence belongs to the complex I subunit 4L family. In terms of assembly, NDH-1 is composed of 14 different subunits. Subunits NuoA, H, J, K, L, M, N constitute the membrane sector of the complex.

The protein localises to the cell membrane. The enzyme catalyses a quinone + NADH + 5 H(+)(in) = a quinol + NAD(+) + 4 H(+)(out). In terms of biological role, NDH-1 shuttles electrons from NADH, via FMN and iron-sulfur (Fe-S) centers, to quinones in the respiratory chain. The immediate electron acceptor for the enzyme in this species is believed to be a menaquinone. Couples the redox reaction to proton translocation (for every two electrons transferred, four hydrogen ions are translocated across the cytoplasmic membrane), and thus conserves the redox energy in a proton gradient. In Bacillus cereus (strain AH820), this protein is NADH-quinone oxidoreductase subunit K.